We begin with the raw amino-acid sequence, 151 residues long: Large ribosomal subunit protein bL9 (151 aa).

This sequence belongs to the bacterial ribosomal protein bL9 family.

Binds to the 23S rRNA. The polypeptide is Large ribosomal subunit protein bL9 (Desulforapulum autotrophicum (strain ATCC 43914 / DSM 3382 / VKM B-1955 / HRM2) (Desulfobacterium autotrophicum)).